The primary structure comprises 445 residues: Bifunctional protein GlmU (445 aa).

A pyrophosphorylase region spans residues 1–218 (MRALVLAAGK…LLEITGVNTR (218 aa)). Residues 6–9 (LAAG), K20, Q69, 74–75 (GT), 96–98 (YGD), G134, E147, N162, and N216 contribute to the UDP-N-acetyl-alpha-D-glucosamine site. D98 lines the Mg(2+) pocket. N216 contacts Mg(2+). The segment at 219–239 (KTLVWLEEQLRMRKIEELLEN) is linker. Residues 240 to 445 (GVTILDPATT…GWVLKKRKEE (206 aa)) are N-acetyltransferase. UDP-N-acetyl-alpha-D-glucosamine is bound by residues R321 and K339. H351 serves as the catalytic Proton acceptor. Residues Y354 and N365 each coordinate UDP-N-acetyl-alpha-D-glucosamine. Residues A368, 374–375 (NY), S393, A411, and R428 each bind acetyl-CoA.

This sequence in the N-terminal section; belongs to the N-acetylglucosamine-1-phosphate uridyltransferase family. It in the C-terminal section; belongs to the transferase hexapeptide repeat family. As to quaternary structure, homotrimer. It depends on Mg(2+) as a cofactor.

The protein localises to the cytoplasm. It catalyses the reaction alpha-D-glucosamine 1-phosphate + acetyl-CoA = N-acetyl-alpha-D-glucosamine 1-phosphate + CoA + H(+). The enzyme catalyses N-acetyl-alpha-D-glucosamine 1-phosphate + UTP + H(+) = UDP-N-acetyl-alpha-D-glucosamine + diphosphate. The protein operates within nucleotide-sugar biosynthesis; UDP-N-acetyl-alpha-D-glucosamine biosynthesis; N-acetyl-alpha-D-glucosamine 1-phosphate from alpha-D-glucosamine 6-phosphate (route II): step 2/2. It participates in nucleotide-sugar biosynthesis; UDP-N-acetyl-alpha-D-glucosamine biosynthesis; UDP-N-acetyl-alpha-D-glucosamine from N-acetyl-alpha-D-glucosamine 1-phosphate: step 1/1. Its pathway is bacterial outer membrane biogenesis; LPS lipid A biosynthesis. Catalyzes the last two sequential reactions in the de novo biosynthetic pathway for UDP-N-acetylglucosamine (UDP-GlcNAc). The C-terminal domain catalyzes the transfer of acetyl group from acetyl coenzyme A to glucosamine-1-phosphate (GlcN-1-P) to produce N-acetylglucosamine-1-phosphate (GlcNAc-1-P), which is converted into UDP-GlcNAc by the transfer of uridine 5-monophosphate (from uridine 5-triphosphate), a reaction catalyzed by the N-terminal domain. This is Bifunctional protein GlmU from Thermotoga sp. (strain RQ2).